A 750-amino-acid polypeptide reads, in one-letter code: Photosystem I P700 chlorophyll a apoprotein A1 (750 aa).

Helical transmembrane passes span valine 70–alanine 93, leucine 156–histidine 179, leucine 195–leucine 219, isoleucine 291–tyrosine 309, tryptophan 346–tyrosine 369, leucine 385–valine 411, alanine 433–histidine 455, and phenylalanine 531–leucine 549. The [4Fe-4S] cluster site is built by cysteine 573 and cysteine 582. 2 consecutive transmembrane segments (helical) span residues histidine 589–tryptophan 610 and leucine 664–phenylalanine 686. Residue histidine 675 coordinates chlorophyll a'. Positions 683 and 691 each coordinate chlorophyll a. Residue tryptophan 692 coordinates phylloquinone. A helical transmembrane segment spans residues alanine 724–alanine 744.

This sequence belongs to the PsaA/PsaB family. In terms of assembly, the PsaA/B heterodimer binds the P700 chlorophyll special pair and subsequent electron acceptors. PSI consists of a core antenna complex that captures photons, and an electron transfer chain that converts photonic excitation into a charge separation. The eukaryotic PSI reaction center is composed of at least 11 subunits. P700 is a chlorophyll a/chlorophyll a' dimer, A0 is one or more chlorophyll a, A1 is one or both phylloquinones and FX is a shared 4Fe-4S iron-sulfur center. serves as cofactor.

Its subcellular location is the plastid. It localises to the chloroplast thylakoid membrane. The catalysed reaction is reduced [plastocyanin] + hnu + oxidized [2Fe-2S]-[ferredoxin] = oxidized [plastocyanin] + reduced [2Fe-2S]-[ferredoxin]. In terms of biological role, psaA and PsaB bind P700, the primary electron donor of photosystem I (PSI), as well as the electron acceptors A0, A1 and FX. PSI is a plastocyanin-ferredoxin oxidoreductase, converting photonic excitation into a charge separation, which transfers an electron from the donor P700 chlorophyll pair to the spectroscopically characterized acceptors A0, A1, FX, FA and FB in turn. Oxidized P700 is reduced on the lumenal side of the thylakoid membrane by plastocyanin. The protein is Photosystem I P700 chlorophyll a apoprotein A1 of Hordeum vulgare (Barley).